The chain runs to 607 residues: MGVDELSHLKFSLLLESSACNDLSGFKSLVEEEGLESIDGSGLWYGRRLGSKKMGFEERTPLMIAALFGSKEVVDYIISTGLVDVNRSCGSDGATALHCAVSGLSANSLEIVTLLLKGSANPDSCDAYGNKPGDVIFPCLSPVFSARMKVLERLLKGNDDLNEVNGQEESEPEVEVEVEVSPPRGSERKEYPVDPTLPDIKNGVYGTDEFRMYAFKIKPCSRAYSHDWTECPFVHPGENARRRDPRKYHYSCVPCPEFRKGSCSRGDTCEYAHGIFECWLHPAQYRTRLCKDETNCSRRVCFFAHKPEELRPLYPSTGSGVPSPRSSFSSCNSSTAFDMGPISPLPIGATTTPPLSPNGVSSPIGGGKTWMNWPNITPPALQLPGSRLKSALNAREIDFSEEMQSLTSPTTWNNTPMSSPFSGKGMNRLAGGAMSPVNSLSDMFGTEDNTSGLQIRRSVINPQLHSNSLSSSPVGANSLFSMDSSAVLASRAAEFAKQRSQSFIERNNGLNHHPAISSMTTTCLNDWGSLDGKLDWSVQGDELQKLRKSTSFRLRAGGMESRLPNEGTGLEEPDVSWVEPLVKEPQETRLAPVWMEQSYMETEQTVA.

ANK repeat units follow at residues 57-87 (EERT…DVNR) and 92-124 (DGAT…NPDS). A compositionally biased stretch (acidic residues) spans 161 to 178 (LNEVNGQEESEPEVEVEV). The interval 161–193 (LNEVNGQEESEPEVEVEVEVSPPRGSERKEYPV) is disordered. C3H1-type zinc fingers lie at residues 254–276 (PCPE…HGIF) and 284–308 (QYRT…HKPE). The segment at 342–363 (ISPLPIGATTTPPLSPNGVSSP) is disordered. A compositionally biased stretch (polar residues) spans 349-361 (ATTTPPLSPNGVS).

This is Zinc finger CCCH domain-containing protein 66 from Arabidopsis thaliana (Mouse-ear cress).